Here is a 365-residue protein sequence, read N- to C-terminus: Deoxyribonuclease-2-alpha (365 aa).

Residues 1–19 (MATLSSLLLTALLWVPVGT) form the signal peptide. The cysteines at positions 22 and 162 are disulfide-linked. N-linked (GlcNAc...) asparagine glycosylation is found at N215, N269, and N293. Cystine bridges form between C270–C348 and C311–C330. The active site involves H298.

The protein belongs to the DNase II family.

Its subcellular location is the lysosome. The enzyme catalyses Endonucleolytic cleavage to nucleoside 3'-phosphates and 3'-phosphooligonucleotide end-products.. Hydrolyzes DNA under acidic conditions with a preference for double-stranded DNA. Plays a major role in the clearance of nucleic acids generated through apoptosis, hence preventing autoinflammation. Necessary for proper fetal development and for definitive erythropoiesis in fetal liver and bone marrow, where it degrades nuclear DNA expelled from erythroid precursor cells. This chain is Deoxyribonuclease-2-alpha (DNASE2), found in Bos taurus (Bovine).